Reading from the N-terminus, the 539-residue chain is Chaperonin GroEL (539 aa).

ATP contacts are provided by residues 29–32 (TIGP), 86–90 (DGTTT), G413, 476–478 (NAA), and D492.

It belongs to the chaperonin (HSP60) family. As to quaternary structure, forms a cylinder of 14 subunits composed of two heptameric rings stacked back-to-back. Interacts with the co-chaperonin GroES.

It localises to the cytoplasm. The enzyme catalyses ATP + H2O + a folded polypeptide = ADP + phosphate + an unfolded polypeptide.. In terms of biological role, together with its co-chaperonin GroES, plays an essential role in assisting protein folding. The GroEL-GroES system forms a nano-cage that allows encapsulation of the non-native substrate proteins and provides a physical environment optimized to promote and accelerate protein folding. This Pediococcus pentosaceus (strain ATCC 25745 / CCUG 21536 / LMG 10740 / 183-1w) protein is Chaperonin GroEL.